The primary structure comprises 321 residues: Gap junction delta-2 protein (321 aa).

Residues 1 to 19 (MGEWTILERLLEAAVQQHS) are Cytoplasmic-facing. A helical transmembrane segment spans residues 20–42 (TMIGRILLTVVVIFRILIVAIVG). Topologically, residues 43–75 (ETVYDDEQTMFVCNTLQPGCNQACYDRAFPISH) are extracellular. The chain crosses the membrane as a helical span at residues 76 to 98 (IRYWVFQIIMVCTPSLCFITYSV). Topologically, residues 99 to 197 (HQSAKQRERR…KLRRQEGISR (99 aa)) are cytoplasmic. The interval 118–141 (RDPPESIGGPGGTGGGGSGGGKRE) is disordered. Gly residues predominate over residues 125–137 (GGPGGTGGGGSGG). Residues 198 to 220 (FYIIQVVFRNALEIGFLVGQYFL) traverse the membrane as a helical segment. The Extracellular segment spans residues 221 to 252 (YGFSVPGLYECNRYPCIKEVECYVSRPTEKTV). Residues 253 to 275 (FLVFMFAVSGICVVLNLAELNHL) traverse the membrane as a helical segment. The Cytoplasmic portion of the chain corresponds to 276-321 (GWRKIKLAVRGAQAKRKSIYEIRNKDLPRVSVPNFGRTQSSDSAYV).

This sequence belongs to the connexin family. Delta-type subfamily. A connexon is composed of a hexamer of connexins. As to expression, highly expressed in neurons.

The protein resides in the cell membrane. The protein localises to the cell junction. It localises to the gap junction. One gap junction consists of a cluster of closely packed pairs of transmembrane channels, the connexons, through which materials of low MW diffuse from one cell to a neighboring cell. This Homo sapiens (Human) protein is Gap junction delta-2 protein (GJD2).